A 451-amino-acid polypeptide reads, in one-letter code: UDP-glycosyltransferase 13 (451 aa).

H15 functions as the Proton acceptor in the catalytic mechanism. H15 serves as a coordination point for an anthocyanidin. Catalysis depends on D93, which acts as the Charge relay. Positions 326, 328, 343, 346, 347, 348, and 351 each coordinate UDP-alpha-D-glucose. Residue A366 coordinates an anthocyanidin. Positions 367 and 368 each coordinate UDP-alpha-D-glucose.

The protein belongs to the UDP-glycosyltransferase family. As to expression, expressed in roots. Detected in stems and leaves.

It carries out the reaction a 7-hydroxyisoflavone + UDP-alpha-D-glucose = a 7-hydroxyisoflavone 7-O-beta-D-glucoside + UDP + H(+). In terms of biological role, isoflavone 7-O-glucosyltransferase converting daidzein to daidzin, genistein to genistin and formononetin to ononin. Shows some activity toward the flavanones liquiritigenin and naringenin, but not toward cyanidin, isoliquiritigenin, apigenin, luteolin, kaempferol, quercetin, daidzin and puerarin. This is UDP-glycosyltransferase 13 from Pueraria montana var. lobata (Kudzu vine).